The chain runs to 227 residues: Cytochrome c oxidase subunit 2 (227 aa).

Over methionine 1–serine 14 the chain is Mitochondrial intermembrane. A helical membrane pass occupies residues proline 15–methionine 45. Residues leucine 46–glutamine 59 are Mitochondrial matrix-facing. Residues glutamate 60 to methionine 87 form a helical membrane-spanning segment. At aspartate 88–isoleucine 227 the chain is on the mitochondrial intermembrane side. Histidine 161, cysteine 196, glutamate 198, cysteine 200, histidine 204, and methionine 207 together coordinate Cu cation. Glutamate 198 serves as a coordination point for Mg(2+). Residue tyrosine 218 is modified to Phosphotyrosine.

It belongs to the cytochrome c oxidase subunit 2 family. In terms of assembly, component of the cytochrome c oxidase (complex IV, CIV), a multisubunit enzyme composed of 14 subunits. The complex is composed of a catalytic core of 3 subunits MT-CO1, MT-CO2 and MT-CO3, encoded in the mitochondrial DNA, and 11 supernumerary subunits COX4I, COX5A, COX5B, COX6A, COX6B, COX6C, COX7A, COX7B, COX7C, COX8 and NDUFA4, which are encoded in the nuclear genome. The complex exists as a monomer or a dimer and forms supercomplexes (SCs) in the inner mitochondrial membrane with NADH-ubiquinone oxidoreductase (complex I, CI) and ubiquinol-cytochrome c oxidoreductase (cytochrome b-c1 complex, complex III, CIII), resulting in different assemblies (supercomplex SCI(1)III(2)IV(1) and megacomplex MCI(2)III(2)IV(2)). Found in a complex with TMEM177, COA6, COX18, COX20, SCO1 and SCO2. Interacts with TMEM177 in a COX20-dependent manner. Interacts with COX20. Interacts with COX16. Requires Cu cation as cofactor.

It is found in the mitochondrion inner membrane. It carries out the reaction 4 Fe(II)-[cytochrome c] + O2 + 8 H(+)(in) = 4 Fe(III)-[cytochrome c] + 2 H2O + 4 H(+)(out). Its function is as follows. Component of the cytochrome c oxidase, the last enzyme in the mitochondrial electron transport chain which drives oxidative phosphorylation. The respiratory chain contains 3 multisubunit complexes succinate dehydrogenase (complex II, CII), ubiquinol-cytochrome c oxidoreductase (cytochrome b-c1 complex, complex III, CIII) and cytochrome c oxidase (complex IV, CIV), that cooperate to transfer electrons derived from NADH and succinate to molecular oxygen, creating an electrochemical gradient over the inner membrane that drives transmembrane transport and the ATP synthase. Cytochrome c oxidase is the component of the respiratory chain that catalyzes the reduction of oxygen to water. Electrons originating from reduced cytochrome c in the intermembrane space (IMS) are transferred via the dinuclear copper A center (CU(A)) of subunit 2 and heme A of subunit 1 to the active site in subunit 1, a binuclear center (BNC) formed by heme A3 and copper B (CU(B)). The BNC reduces molecular oxygen to 2 water molecules using 4 electrons from cytochrome c in the IMS and 4 protons from the mitochondrial matrix. The protein is Cytochrome c oxidase subunit 2 (MT-CO2) of Micaelamys namaquensis (Namaqua rock rat).